The primary structure comprises 353 residues: Sesquiterpene synthase Agr8 (353 aa).

Residues aspartate 82, asparagine 220, serine 224, and glutamate 228 each contribute to the Mg(2+) site. The short motif at 82 to 86 is the DDXXD motif element; that stretch reads DEYTD. Positions 309 and 310 each coordinate (2E,6E)-farnesyl diphosphate.

This sequence belongs to the terpene synthase family. It depends on Mg(2+) as a cofactor.

The catalysed reaction is (2E,6E)-farnesyl diphosphate = gamma-muurolene + diphosphate. The enzyme catalyses (2E,6E)-farnesyl diphosphate = alpha-selinene + diphosphate. It carries out the reaction (2E,6E)-farnesyl diphosphate = delta-cadinene + diphosphate. Terpene cyclase that catalyzes the cyclization of farnesyl diphosphate (FPP) to various sesquiterpenes, including beta-elemene, gamma-muurolene, alpha-selinene, beta-selinene, beta-cadinene, delta-cadinene and alpha-cadinol. This Cyclocybe aegerita (Black poplar mushroom) protein is Sesquiterpene synthase Agr8.